A 122-amino-acid chain; its full sequence is Large ribosomal subunit protein uL14 (122 aa).

It belongs to the universal ribosomal protein uL14 family. Part of the 50S ribosomal subunit. Forms a cluster with proteins L3 and L19. In the 70S ribosome, L14 and L19 interact and together make contacts with the 16S rRNA in bridges B5 and B8.

Its function is as follows. Binds to 23S rRNA. Forms part of two intersubunit bridges in the 70S ribosome. The chain is Large ribosomal subunit protein uL14 from Thermosipho africanus (strain TCF52B).